We begin with the raw amino-acid sequence, 191 residues long: Abscisic acid receptor PYR1 (191 aa).

An START-like region spans residues 23–176 (YQLDPGSCSS…NLQKLATVAE (154 aa)). Abscisate is bound at residue Lys59. Thr78 carries the phosphothreonine; by CARK1 modification. A Gate loop motif is present at residues 85 to 89 (SGLPA). Residues 89–94 (ANTSTE), 116–122 (RLTNYKS), and Glu141 contribute to the abscisate site. Residues 115-117 (HRL) carry the Latch loop motif.

The protein belongs to the PYR/PYL/RCAR abscisic acid intracellular receptor family. As to quaternary structure, homodimer. Binds ABA on one subunit only. Interacts with HAB1, AHG3, ABI1 and ABI2 when complexed to ABA, and possibly with other PP2Cs. Binds to CARs protein in an ABA-independent manner, both at the plasma membrane and in the nucleus. Interacts directly with CAR1 and CAR4. Interacts with CARK1 in the cytosol. Interacts with AIP1 in an abscisic acid-dependent manner. Interacts with FREE1 (via N-terminus). Interacts with the E3 ubiquitin-protein ligase RSL1 at the plasma membrane. Post-translationally, ubiquitynated and degraded by the proteasome upon binding to the E3 ubiquitin-protein ligase RSL1 at the plasma membrane. Phosphorylated by CARK1 especially in response to abscisic acid (ABA); this phosphorylation promotes its stability and inhibitory ability to ABI1.

It is found in the cytoplasm. It localises to the cytosol. The protein localises to the nucleus. Its subcellular location is the cell membrane. The protein resides in the vacuole. Its function is as follows. Receptor for abscisic acid (ABA) required for ABA-mediated responses such as stomatal closure and germination inhibition. Inhibits the activity of group-A protein phosphatases type 2C (PP2Cs) when activated by ABA. Can be activated by both (-)-ABA and (+)-ABA. Promotes drought tolerance. This Arabidopsis thaliana (Mouse-ear cress) protein is Abscisic acid receptor PYR1.